We begin with the raw amino-acid sequence, 232 residues long: N-(5'-phosphoribosyl)anthranilate isomerase (232 aa).

The protein belongs to the TrpF family.

It catalyses the reaction N-(5-phospho-beta-D-ribosyl)anthranilate = 1-(2-carboxyphenylamino)-1-deoxy-D-ribulose 5-phosphate. It participates in amino-acid biosynthesis; L-tryptophan biosynthesis; L-tryptophan from chorismate: step 3/5. This is N-(5'-phosphoribosyl)anthranilate isomerase (TRP1) from Wickerhamomyces anomalus (Yeast).